The chain runs to 237 residues: Ribonuclease PH (237 aa).

Phosphate-binding positions include Arg-86 and 124–126 (GTR).

This sequence belongs to the RNase PH family. As to quaternary structure, homohexameric ring arranged as a trimer of dimers.

The catalysed reaction is tRNA(n+1) + phosphate = tRNA(n) + a ribonucleoside 5'-diphosphate. Functionally, phosphorolytic 3'-5' exoribonuclease that plays an important role in tRNA 3'-end maturation. Removes nucleotide residues following the 3'-CCA terminus of tRNAs; can also add nucleotides to the ends of RNA molecules by using nucleoside diphosphates as substrates, but this may not be physiologically important. Probably plays a role in initiation of 16S rRNA degradation (leading to ribosome degradation) during starvation. The sequence is that of Ribonuclease PH from Idiomarina loihiensis (strain ATCC BAA-735 / DSM 15497 / L2-TR).